Consider the following 231-residue polypeptide: MAKLTKRQKQIRERVDGNHAYPVDEALALVKELATARFPESIDVAVNLGVDPRKSDQIVRGSTVLPNGTGKSMRVAVFAQGENADAAQAEGADAVGMDDLAERMQGGELDYDVVIASPDAMGVVGKLGPVLGPRGLMPNPKTGTVSADVAGAVRNAKAGQVRYRTDRGGVIHSAIGRANFDEQALRENLDALLADLNKLKPSTSKGVYIKGITVSSTMGAGVRVDRATLGV.

The protein belongs to the universal ribosomal protein uL1 family. As to quaternary structure, part of the 50S ribosomal subunit.

Its function is as follows. Binds directly to 23S rRNA. The L1 stalk is quite mobile in the ribosome, and is involved in E site tRNA release. In terms of biological role, protein L1 is also a translational repressor protein, it controls the translation of the L11 operon by binding to its mRNA. This Halorhodospira halophila (strain DSM 244 / SL1) (Ectothiorhodospira halophila (strain DSM 244 / SL1)) protein is Large ribosomal subunit protein uL1.